The chain runs to 753 residues: 5-methyltetrahydropteroyltriglutamate--homocysteine methyltransferase (753 aa).

5-methyltetrahydropteroyltri-L-glutamate is bound by residues R17–K20 and K117. Residues I431–S433 and E484 each bind L-homocysteine. L-methionine is bound by residues I431 to S433 and E484. 5-methyltetrahydropteroyltri-L-glutamate contacts are provided by residues R515–C516 and W561. D599 is a binding site for L-homocysteine. Residue D599 coordinates L-methionine. 5-methyltetrahydropteroyltri-L-glutamate is bound at residue E605. Residues H641, C643, and E665 each contribute to the Zn(2+) site. H694 functions as the Proton donor in the catalytic mechanism. C726 contacts Zn(2+).

It belongs to the vitamin-B12 independent methionine synthase family. Zn(2+) is required as a cofactor.

It carries out the reaction 5-methyltetrahydropteroyltri-L-glutamate + L-homocysteine = tetrahydropteroyltri-L-glutamate + L-methionine. It participates in amino-acid biosynthesis; L-methionine biosynthesis via de novo pathway; L-methionine from L-homocysteine (MetE route): step 1/1. Catalyzes the transfer of a methyl group from 5-methyltetrahydrofolate to homocysteine resulting in methionine formation. The chain is 5-methyltetrahydropteroyltriglutamate--homocysteine methyltransferase from Shigella flexneri.